A 722-amino-acid chain; its full sequence is uncharacterized protein (722 aa).

Residues Ser575, Asp658, and His691 each act as charge relay system in the active site.

It belongs to the peptidase S9B family.

This is an uncharacterized protein from Rickettsia prowazekii (strain Madrid E).